Here is a 118-residue protein sequence, read N- to C-terminus: UPF0344 protein Aflv_2205 (118 aa).

Helical transmembrane passes span 4-24 (AHITTWVVALILFVVAIALQA), 32-52 (MLHMLLRLFYILIIATGAWIL), 60-80 (FLYIVKVIVGLWVIGTMEMIL), and 96-116 (FIVAFVVVLYLGFKLPFGFSF).

The protein belongs to the UPF0344 family.

It localises to the cell membrane. This is UPF0344 protein Aflv_2205 from Anoxybacillus flavithermus (strain DSM 21510 / WK1).